We begin with the raw amino-acid sequence, 71 residues long: Conotoxin AbVIG (71 aa).

The first 17 residues, 1–17 (VLIIAVLFLTACQLTTA), serve as a signal peptide directing secretion. Residues 18–40 (ETSSRGKQKHRALRSTDKNSRMT) constitute a propeptide that is removed on maturation. Intrachain disulfides connect C43-C57, C50-C61, and C56-C68.

This sequence belongs to the conotoxin O1 superfamily. Expressed by the venom duct.

It localises to the secreted. The polypeptide is Conotoxin AbVIG (Conus abbreviatus (Abbreviated cone)).